The sequence spans 146 residues: Interleukin-3 (146 aa).

An N-terminal signal peptide occupies residues 1–17 (MSSLSILHLLLLLLSLH). N-linked (GlcNAc...) asparagine glycosylation occurs at N65.

Belongs to the IL-3 family. Monomer. Activated T-cells, mast cells, natural killer cells.

It localises to the secreted. Functionally, granulocyte/macrophage colony-stimulating factors are cytokines that act in hematopoiesis by controlling the production, differentiation, and function of 2 related white cell populations of the blood, the granulocytes and the monocytes-macrophages. Its function is as follows. This CSF induces granulocytes, macrophages, mast cells, stem cells, erythroid cells, eosinophils and megakaryocytes. The polypeptide is Interleukin-3 (IL3) (Ovis aries (Sheep)).